A 663-amino-acid chain; its full sequence is MAU2 chromatid cohesion factor homolog (663 aa).

TPR repeat units follow at residues 455–488 and 495–528; these read GGFY…ANAE and SCSL…ASKI.

Belongs to the SCC4/mau-2 family. As to quaternary structure, interacts with Nipped-B to form the cohesin loading complex.

Its subcellular location is the nucleus. The protein localises to the nucleoplasm. Functionally, required for association of the cohesin complex with chromatin during interphase. Plays a role in sister chromatid cohesion and normal progression through prometaphase. The polypeptide is MAU2 chromatid cohesion factor homolog (Drosophila willistoni (Fruit fly)).